We begin with the raw amino-acid sequence, 359 residues long: Aflatoxin B1 aldehyde reductase member 2 (359 aa).

The transit peptide at 1 to 38 (MLSAASRVVSRAAVHCALRSPPPEARALAMSRPPPPRV) directs the protein to the mitochondrion. The residue at position 40 (S40) is a Phosphoserine. Residue D72 participates in NADP(+) binding. Y77 functions as the Proton donor in the catalytic mechanism. Residue K128 is modified to N6-acetyllysine. Position 141 (H141) interacts with substrate. NADP(+) contacts are provided by residues 171–172 (SN), Q197, 226–236 (NPLAGGLLTGK), and R250. K236 bears the N6-succinyllysine mark. S255 carries the post-translational modification Phosphoserine. Substrate-binding residues include Y260 and R263. NADP(+) is bound at residue 318-326 (SSLEQLEQN). R359 contributes to the substrate binding site.

This sequence belongs to the aldo/keto reductase family. Aldo/keto reductase 2 subfamily. Homodimer. As to expression, detected in brain, liver, small intestine and testis, and at lower levels in heart, prostate, skeletal muscle and spleen. Detected in kidney proximal and distal tubules, endothelial cells lining the Bowman's capsules and some cysts. Detected at low levels in lung and pancreas (at protein level). Widely expressed.

The protein localises to the mitochondrion. The protein resides in the golgi apparatus. Its subcellular location is the cytoplasm. It carries out the reaction 4-hydroxybutanoate + NADP(+) = succinate semialdehyde + NADPH + H(+). Its function is as follows. Catalyzes the NADPH-dependent reduction of succinic semialdehyde to gamma-hydroxybutyrate. May have an important role in producing the neuromodulator gamma-hydroxybutyrate (GHB). Has broad substrate specificity. Has NADPH-dependent aldehyde reductase activity towards 2-carboxybenzaldehyde, 2-nitrobenzaldehyde and pyridine-2-aldehyde (in vitro). Can reduce 1,2-naphthoquinone and 9,10-phenanthrenequinone (in vitro). Can reduce the dialdehyde protein-binding form of aflatoxin B1 (AFB1) to the non-binding AFB1 dialcohol. May be involved in protection of liver against the toxic and carcinogenic effects of AFB1, a potent hepatocarcinogen. The protein is Aflatoxin B1 aldehyde reductase member 2 (AKR7A2) of Homo sapiens (Human).